We begin with the raw amino-acid sequence, 555 residues long: Glutamine--tRNA ligase (555 aa).

The short motif at 34-44 (PEPNGYLHIGH) is the 'HIGH' region element. ATP is bound by residues 35-37 (EPN) and 41-47 (HIGHAKS). L-glutamine is bound by residues aspartate 67 and tyrosine 212. Residues threonine 231, 261–262 (RL), and 269–271 (MSK) contribute to the ATP site. Positions 268–272 (VMSKR) match the 'KMSKS' region motif. The tract at residues 317 to 324 (TKQDNTIE) is interaction with tRNA.

This sequence belongs to the class-I aminoacyl-tRNA synthetase family. Monomer.

It is found in the cytoplasm. It catalyses the reaction tRNA(Gln) + L-glutamine + ATP = L-glutaminyl-tRNA(Gln) + AMP + diphosphate. The polypeptide is Glutamine--tRNA ligase (Enterobacter sp. (strain 638)).